The primary structure comprises 137 residues: Fluoride-specific ion channel FluC 1 (137 aa).

The next 4 membrane-spanning stretches (helical) occupy residues Leu-4 to Gly-24, Leu-37 to Ile-57, Val-67 to Val-87, and Trp-98 to Leu-118. Residues Gly-77 and Thr-80 each contribute to the Na(+) site.

Belongs to the fluoride channel Fluc/FEX (TC 1.A.43) family.

The protein localises to the cell membrane. The catalysed reaction is fluoride(in) = fluoride(out). Na(+) is not transported, but it plays an essential structural role and its presence is essential for fluoride channel function. In terms of biological role, fluoride-specific ion channel. Important for reducing fluoride concentration in the cell, thus reducing its toxicity. This is Fluoride-specific ion channel FluC 1 from Bacillus cereus (strain ZK / E33L).